Consider the following 179-residue polypeptide: Large ribosomal subunit protein uL6 (179 aa).

This sequence belongs to the universal ribosomal protein uL6 family. In terms of assembly, part of the 50S ribosomal subunit.

This protein binds to the 23S rRNA, and is important in its secondary structure. It is located near the subunit interface in the base of the L7/L12 stalk, and near the tRNA binding site of the peptidyltransferase center. The polypeptide is Large ribosomal subunit protein uL6 (Clostridium acetobutylicum (strain ATCC 824 / DSM 792 / JCM 1419 / IAM 19013 / LMG 5710 / NBRC 13948 / NRRL B-527 / VKM B-1787 / 2291 / W)).